The primary structure comprises 111 residues: Wound-induced proteinase inhibitor 1 (111 aa).

The first 23 residues, 1 to 23 (MEAKFAHIILFFLLAFSFETLMA), serve as a signal peptide directing secretion. Residues 24–36 (RKESDGPEVIKLL) constitute a propeptide that is removed on maturation.

It belongs to the protease inhibitor I13 (potato type I serine protease inhibitor) family.

The protein resides in the secreted. This Solanum peruvianum (Peruvian tomato) protein is Wound-induced proteinase inhibitor 1.